We begin with the raw amino-acid sequence, 381 residues long: Homoserine O-succinyltransferase (381 aa).

The 316-residue stretch at 45–360 folds into the AB hydrolase-1 domain; that stretch reads NAVLVCHALN…PHGHDAFLLD (316 aa). S151 functions as the Nucleophile in the catalytic mechanism. Position 221 (R221) interacts with substrate. Residues D321 and H354 contribute to the active site. D355 serves as a coordination point for substrate.

It belongs to the AB hydrolase superfamily. MetX family. As to quaternary structure, homodimer.

It localises to the cytoplasm. It catalyses the reaction L-homoserine + succinyl-CoA = O-succinyl-L-homoserine + CoA. It participates in amino-acid biosynthesis; L-methionine biosynthesis via de novo pathway; O-succinyl-L-homoserine from L-homoserine: step 1/1. Its function is as follows. Transfers a succinyl group from succinyl-CoA to L-homoserine, forming succinyl-L-homoserine. The sequence is that of Homoserine O-succinyltransferase from Paraburkholderia xenovorans (strain LB400).